The following is a 308-amino-acid chain: Aspartate carbamoyltransferase catalytic subunit (308 aa).

Carbamoyl phosphate is bound by residues arginine 57 and threonine 58. Lysine 86 is an L-aspartate binding site. Positions 107, 135, and 138 each coordinate carbamoyl phosphate. L-aspartate contacts are provided by arginine 168 and arginine 228. Residues leucine 267 and proline 268 each coordinate carbamoyl phosphate.

This sequence belongs to the aspartate/ornithine carbamoyltransferase superfamily. ATCase family. Heterododecamer (2C3:3R2) of six catalytic PyrB chains organized as two trimers (C3), and six regulatory PyrI chains organized as three dimers (R2).

The enzyme catalyses carbamoyl phosphate + L-aspartate = N-carbamoyl-L-aspartate + phosphate + H(+). It participates in pyrimidine metabolism; UMP biosynthesis via de novo pathway; (S)-dihydroorotate from bicarbonate: step 2/3. Functionally, catalyzes the condensation of carbamoyl phosphate and aspartate to form carbamoyl aspartate and inorganic phosphate, the committed step in the de novo pyrimidine nucleotide biosynthesis pathway. The polypeptide is Aspartate carbamoyltransferase catalytic subunit (Leptospira borgpetersenii serovar Hardjo-bovis (strain JB197)).